The following is a 1028-amino-acid chain: MRGFMSKDGNLDTSEFDTLANKEYTAEQKQTLEQGQKEFLSQTTTPELEADDGFIVTSASFAQSTPSMSALSGNISPDSQTSDPITKAVRETIIQPQKDNLIEQILKDLAALTDRDLAEQKRKEIEEEKEKDKTLSTFFGNPANREFIDKALDNPELKKKLESIEIAGYKNVHNTFSAASGYPGGFKPVQWENHVSASDLRATVVKNDAGDELCTLNETTVKTKPFTLAKQDGTQVQISSYREIDFPIKLDKADGSMHLSMVALKADGTKPSKDKAVYFTAHYEEGPNGKPQLKEISSPKPLKFAGTGDDAIAYIEHGGEIYTLAVTRGKYKEMMKEVELNQGQSVDLSQAEDIIIGQGQSKEQPLITPQQTTSSSVEPPQYKQQVPPITPTNQPLQPETSQMQQSQQVTPNLLNTATALSGSMQDLLNYVNAGLTKEIDSNKQIDLIKEAATAILNNEKSDIAEKQANIIALAENTVNNKNLKPDAKVAGVNAILETIKNDQNTPNLEKSKMLEATVAIVLNSENLESKQKQQMLEKAVDVGLSLKDDASRAATIDGIKDVVIKSNLSTEDKGTMLIAVGDKVNVSELSNAEKQKLLGSVLKKDVEAQVLSPAQQQLMQQHLDKITAEQTKKDTIKKVNDILFDPLSNTELKTTNIQAITSNVLDGPATAEVKGEIIQEITNTVAGSSLEAQDKAAIIKGVGETIATHSDTSLSLPNKALIMASAEKGIAESQTNLPDRELMTKGLVDGIYEGKGGPEITKAVSSGIDNSNINDSEKEALKKAKDAASEAALDRDTQNLTEGLKGQNIEEHKPHDDIYNKAREVINAVNPVIEALEKSKEPVVSAEDRIVQETSSILNNISKLAVEKVNNLRAMLSPNGNLKTLEEKKEESIKKVDELVKAFGTKSSTEEQQSFIKTNLIDDKTLSKEVRLQTIDKLLQEQKRAEAIENPSVKTEDVRVVSGKSKLKPISKDNPDIEKAKMVVGRDRVNIKGNIKIMGALMNARDIIQSENLNKSIPIKRESSPPQR.

2 stretches are compositionally biased toward polar residues: residues 359-384 (GQSKEQPLITPQQTTSSSVEPPQYKQ) and 391-400 (PTNQPLQPET). A disordered region spans residues 359 to 405 (GQSKEQPLITPQQTTSSSVEPPQYKQQVPPITPTNQPLQPETSQMQQ).

It localises to the cytoplasm. This is Antigenic heat-stable 120 kDa protein (sca4) from Rickettsia africae.